We begin with the raw amino-acid sequence, 129 residues long: Small ribosomal subunit protein uS9 (129 aa).

The interval 98-129 (KAQGFLTRDPRKKERKKYGRKKARKSFQFSKR) is disordered. Basic residues predominate over residues 110 to 129 (KERKKYGRKKARKSFQFSKR).

The protein belongs to the universal ribosomal protein uS9 family.

This Chlamydia trachomatis serovar L2 (strain ATCC VR-902B / DSM 19102 / 434/Bu) protein is Small ribosomal subunit protein uS9.